The sequence spans 79 residues: Sec-independent protein translocase protein TatA (79 aa).

Residues 1 to 21 (MGGFTSIWHWVIVLLVIVLLF) form a helical membrane-spanning segment. The interval 48 to 79 (EEEAKNEPKTLDAQATQTKVHESSEIKSKQES) is disordered. The span at 66–79 (KVHESSEIKSKQES) shows a compositional bias: basic and acidic residues.

It belongs to the TatA/E family. The Tat system comprises two distinct complexes: a TatABC complex, containing multiple copies of TatA, TatB and TatC subunits, and a separate TatA complex, containing only TatA subunits. Substrates initially bind to the TatABC complex, which probably triggers association of the separate TatA complex to form the active translocon.

The protein resides in the cell inner membrane. Functionally, part of the twin-arginine translocation (Tat) system that transports large folded proteins containing a characteristic twin-arginine motif in their signal peptide across membranes. TatA could form the protein-conducting channel of the Tat system. This Helicobacter pylori (strain ATCC 700392 / 26695) (Campylobacter pylori) protein is Sec-independent protein translocase protein TatA.